A 363-amino-acid polypeptide reads, in one-letter code: Glycerol-3-phosphate dehydrogenase [NAD(+)], cytoplasmic (363 aa).

NAD(+)-binding positions include 11–16 (GSGNWG), phenylalanine 98, lysine 121, and alanine 155. Lysine 121 is a substrate binding site. Residue lysine 206 is the Proton acceptor of the active site. The NAD(+) site is built by arginine 270 and glutamine 299. Residue 270–271 (RN) participates in substrate binding.

Belongs to the NAD-dependent glycerol-3-phosphate dehydrogenase family. Homodimer. In terms of tissue distribution, isoform GPDH-1 is predominant in thorax and isoform GPDH-3 in abdomen.

The protein localises to the cytoplasm. It catalyses the reaction sn-glycerol 3-phosphate + NAD(+) = dihydroxyacetone phosphate + NADH + H(+). It participates in phospholipid metabolism; alpha-glycerophosphate cycle. The polypeptide is Glycerol-3-phosphate dehydrogenase [NAD(+)], cytoplasmic (Drosophila melanogaster (Fruit fly)).